We begin with the raw amino-acid sequence, 93 residues long: Alpha-defensin 21 (93 aa).

A signal peptide spans 1-19 (MKTLVLLSALILLAYQVQT). A propeptide spanning residues 20–58 (DPIQNTDEETNTEEQPGEDDQAVSVSFGGQEGSALHEKL) is cleaved from the precursor. A disordered region spans residues 22–43 (IQNTDEETNTEEQPGEDDQAVS). Residues 25–40 (TDEETNTEEQPGEDDQ) are compositionally biased toward acidic residues. 3 disulfide bridges follow: C64–C89, C66–C81, and C71–C88.

It belongs to the alpha-defensin family.

It is found in the secreted. Its function is as follows. May have microbicidal activities. This chain is Alpha-defensin 21 (Defa21), found in Mus musculus (Mouse).